Consider the following 290-residue polypeptide: 1D-myo-inositol 2-acetamido-2-deoxy-alpha-D-glucopyranoside deacetylase (290 aa).

Residues H17, D20, and H150 each contribute to the Zn(2+) site.

Belongs to the MshB deacetylase family. The cofactor is Zn(2+).

It carries out the reaction 1D-myo-inositol 2-acetamido-2-deoxy-alpha-D-glucopyranoside + H2O = 1D-myo-inositol 2-amino-2-deoxy-alpha-D-glucopyranoside + acetate. Functionally, catalyzes the deacetylation of 1D-myo-inositol 2-acetamido-2-deoxy-alpha-D-glucopyranoside (GlcNAc-Ins) in the mycothiol biosynthesis pathway. The chain is 1D-myo-inositol 2-acetamido-2-deoxy-alpha-D-glucopyranoside deacetylase from Corynebacterium glutamicum (strain R).